The sequence spans 221 residues: Vesicle-associated membrane protein 713 (221 aa).

Ala2 is modified (N-acetylalanine). At 2-190 the chain is on the cytoplasmic side; sequence AIIFALVARG…RTIMWWRNVK (189 aa). In terms of domain architecture, Longin spans 7-112; the sequence is LVARGTVVLS…SMNDEFSRVL (106 aa). Positions 127–187 constitute a v-SNARE coiled-coil homology domain; that stretch reads RMSRIKGEMS…RRYRTIMWWR (61 aa). The chain crosses the membrane as a helical; Anchor for type IV membrane protein span at residues 191-211; that stretch reads LTIALILVLALVVYIAMAFVC. Residues 212–221 are Vesicular-facing; that stretch reads HGPSLPSCFK.

Belongs to the synaptobrevin family. Interacts with subunits of the vacuole protein sorting (HOPS) complex including VPS11, VCL1, VPS18, VPS33, VPS39 and VPS41. As to expression, highly expressed in stems and roots. Detected in flowers and leaves.

The protein resides in the vacuole membrane. It localises to the prevacuolar compartment membrane. Functionally, involved in the targeting and/or fusion of transport vesicles to their target membrane. This chain is Vesicle-associated membrane protein 713, found in Arabidopsis thaliana (Mouse-ear cress).